The chain runs to 417 residues: Phosphoglycerate kinase 2 (417 aa).

(2R)-3-phosphoglycerate is bound by residues V23, D24, F25, N26, N38, R39, S62, H63, G65, R66, L121, R122, H168, and R169. G212 provides a ligand contact to ADP. Residue G212 coordinates CDP. Residues A213 and K214 each coordinate AMP. A213 serves as a coordination point for ATP. A213 lines the Mg(2+) pocket. D217 contributes to the CDP binding site. D217 is a Mg(2+) binding site. An AMP-binding site is contributed by K218. An ATP-binding site is contributed by K218. Residue G236 participates in ADP binding. G236 lines the CDP pocket. AMP contacts are provided by G237 and G312. G237 and G312 together coordinate ATP. The CDP site is built by G337 and F342. An ADP-binding site is contributed by F342. E343 is an AMP binding site. The ATP site is built by E343, D374, and T375. D374 lines the Mg(2+) pocket.

Belongs to the phosphoglycerate kinase family. Monomer. Mg(2+) is required as a cofactor.

The protein resides in the cytoplasm. The protein localises to the mitochondrion. The catalysed reaction is (2R)-3-phosphoglycerate + ATP = (2R)-3-phospho-glyceroyl phosphate + ADP. The protein operates within carbohydrate degradation; glycolysis; pyruvate from D-glyceraldehyde 3-phosphate: step 2/5. Functionally, catalyzes one of the two ATP producing reactions in the glycolytic pathway via the reversible conversion of 1,3-diphosphoglycerate to 3-phosphoglycerate. Both L- and D- forms of purine and pyrimidine nucleotides can be used as substrates, but the activity is much lower on pyrimidines. Negatively regulates the biosynthesis of acetyl-CoA from pyruvate in the mitochondrion. This Rhizopus niveus protein is Phosphoglycerate kinase 2 (PGK2).